The chain runs to 127 residues: MNQTVKVKKKKKTITLGVVHIRASFNNTIVTFTDIQGNTISSASAGGNGFKGARKATPYAAQVTIDRASEKAKEYGLKTISIRIGGPGAQRESAMRALFGQNFVVTSILDVSSIAHNGVRPPKRRRV.

This sequence belongs to the universal ribosomal protein uS11 family. In terms of assembly, part of the 30S ribosomal subunit. Interacts with proteins S7 and S18. Binds to IF-3.

Functionally, located on the platform of the 30S subunit, it bridges several disparate RNA helices of the 16S rRNA. Forms part of the Shine-Dalgarno cleft in the 70S ribosome. In Rickettsia felis (strain ATCC VR-1525 / URRWXCal2) (Rickettsia azadi), this protein is Small ribosomal subunit protein uS11.